The following is a 212-amino-acid chain: Redox-sensing transcriptional repressor Rex (212 aa).

The H-T-H motif DNA-binding region spans 18 to 57 (LYYRFVNTLKSKGIDRVNSKAISEALNIESATIRRDFSYF). Position 92–97 (92–97 (GVGNLG)) interacts with NAD(+).

The protein belongs to the transcriptional regulatory Rex family. As to quaternary structure, homodimer.

Its subcellular location is the cytoplasm. Modulates transcription in response to changes in cellular NADH/NAD(+) redox state. The chain is Redox-sensing transcriptional repressor Rex from Staphylococcus haemolyticus (strain JCSC1435).